A 139-amino-acid chain; its full sequence is Transcription antitermination protein NusB (139 aa).

It belongs to the NusB family.

Functionally, involved in transcription antitermination. Required for transcription of ribosomal RNA (rRNA) genes. Binds specifically to the boxA antiterminator sequence of the ribosomal RNA (rrn) operons. The polypeptide is Transcription antitermination protein NusB (Natranaerobius thermophilus (strain ATCC BAA-1301 / DSM 18059 / JW/NM-WN-LF)).